We begin with the raw amino-acid sequence, 205 residues long: Holliday junction branch migration complex subunit RuvA (205 aa).

Residues 1-64 (MIGKLKGLID…EDQIKLFGFR (64 aa)) form a domain I region. Positions 65 to 143 (SDLEREWFRL…AFASVDPAVV (79 aa)) are domain II. A flexible linker region spans residues 144 to 153 (ALSGALDERS). A domain III region spans residues 153–205 (SAPRPVTDAISALVNLGYGQPQAAAAIASASRSAGEGAETAQLIKLGLKELSK).

Belongs to the RuvA family. In terms of assembly, homotetramer. Forms an RuvA(8)-RuvB(12)-Holliday junction (HJ) complex. HJ DNA is sandwiched between 2 RuvA tetramers; dsDNA enters through RuvA and exits via RuvB. An RuvB hexamer assembles on each DNA strand where it exits the tetramer. Each RuvB hexamer is contacted by two RuvA subunits (via domain III) on 2 adjacent RuvB subunits; this complex drives branch migration. In the full resolvosome a probable DNA-RuvA(4)-RuvB(12)-RuvC(2) complex forms which resolves the HJ.

The protein localises to the cytoplasm. The RuvA-RuvB-RuvC complex processes Holliday junction (HJ) DNA during genetic recombination and DNA repair, while the RuvA-RuvB complex plays an important role in the rescue of blocked DNA replication forks via replication fork reversal (RFR). RuvA specifically binds to HJ cruciform DNA, conferring on it an open structure. The RuvB hexamer acts as an ATP-dependent pump, pulling dsDNA into and through the RuvAB complex. HJ branch migration allows RuvC to scan DNA until it finds its consensus sequence, where it cleaves and resolves the cruciform DNA. The polypeptide is Holliday junction branch migration complex subunit RuvA (Rhodopseudomonas palustris (strain BisB18)).